The chain runs to 350 residues: Phenylalanine--tRNA ligase alpha subunit (350 aa).

E257 is a Mg(2+) binding site.

Belongs to the class-II aminoacyl-tRNA synthetase family. Phe-tRNA synthetase alpha subunit type 1 subfamily. In terms of assembly, tetramer of two alpha and two beta subunits. Requires Mg(2+) as cofactor.

The protein localises to the cytoplasm. The enzyme catalyses tRNA(Phe) + L-phenylalanine + ATP = L-phenylalanyl-tRNA(Phe) + AMP + diphosphate + H(+). This Listeria welshimeri serovar 6b (strain ATCC 35897 / DSM 20650 / CCUG 15529 / CIP 8149 / NCTC 11857 / SLCC 5334 / V8) protein is Phenylalanine--tRNA ligase alpha subunit.